Consider the following 123-residue polypeptide: U11/U12 small nuclear ribonucleoprotein 25 kDa protein (123 aa).

Residues Met-32–Lys-123 form the Ubiquitin-like domain.

In terms of assembly, component of the U11/U12 snRNPs that are part of the U12-type spliceosome.

The protein resides in the nucleus. The protein is U11/U12 small nuclear ribonucleoprotein 25 kDa protein (Snrnp25) of Mus musculus (Mouse).